A 445-amino-acid polypeptide reads, in one-letter code: Neuropeptide Y receptor type 5 (445 aa).

Topologically, residues 1–42 (MEFKLEEHFNKTFVTENNTAAARNAAFPAWEDYRGSVDDLQY) are extracellular. 2 N-linked (GlcNAc...) asparagine glycosylation sites follow: Asn-10 and Asn-17. A helical transmembrane segment spans residues 43 to 63 (FLIGLYTFVSLLGFMGNLLIL). Residues 64-77 (MAVMKKRNQKTTVN) lie on the Cytoplasmic side of the membrane. Residues 78–98 (FLIGNLAFSDILVVLFCSPFT) traverse the membrane as a helical segment. The Extracellular portion of the chain corresponds to 99-117 (LTSVLLDQWMFGKAMCHIM). The cysteines at positions 114 and 198 are disulfide-linked. A helical membrane pass occupies residues 118-138 (PFLQCVSVLVSTLILISIAIV). Residues 139-156 (RYHMIKHPISNNLTANHG) lie on the Cytoplasmic side of the membrane. A helical membrane pass occupies residues 157–177 (YFLIATVWTLGFAICSPLPVF). The Extracellular portion of the chain corresponds to 178–208 (HSLVELKETFGSALLSSKYLCVESWPSDSYR). A helical membrane pass occupies residues 209 to 229 (IAFTISLLLVQYILPLVCLTV). At 230-368 (SHTSVCRSIS…KKRSRSVFYR (139 aa)) the chain is on the cytoplasmic side. The chain crosses the membrane as a helical span at residues 369–389 (LTILILVFAVSWMPLHVFHVV). Topologically, residues 390–406 (TDFNDNLISNRHFKLVY) are extracellular. The helical transmembrane segment at 407–427 (CICHLLGMMSCCLNPILYGFL) threads the bilayer. Over 428 to 445 (NNGIKADLRALIHCLHMS) the chain is Cytoplasmic. Residue Cys-441 is the site of S-palmitoyl cysteine attachment.

The protein belongs to the G-protein coupled receptor 1 family. As to expression, brain; hypothalamus.

It localises to the cell membrane. In terms of biological role, receptor for neuropeptide Y and peptide YY. The activity of this receptor is mediated by G proteins that inhibit adenylate cyclase activity. Seems to be associated with food intake. Could be involved in feeding disorders. The protein is Neuropeptide Y receptor type 5 (Npy5r) of Rattus norvegicus (Rat).